Here is a 154-residue protein sequence, read N- to C-terminus: MTQDYKLQVEAIKCGTVIDHIPAQIGFKLLSLFKLTATDQRITIGLNLPSKRSGRKDLIKIENTFLTEQQANQLAMYAPDATVNRIDNYEVVKKLTLSLPEHIDGVLTCPNSNCISHNEPVDSSFKVKAKQGEIHLKCKYCEKEFDHQVVLQAD.

Zn(2+) contacts are provided by C109, C114, C138, and C141.

The protein belongs to the PyrI family. Contains catalytic and regulatory chains. Zn(2+) serves as cofactor.

Functionally, involved in allosteric regulation of aspartate carbamoyltransferase. In Yersinia enterocolitica serotype O:8 / biotype 1B (strain NCTC 13174 / 8081), this protein is Aspartate carbamoyltransferase regulatory chain.